A 1285-amino-acid polypeptide reads, in one-letter code: Replicase polyprotein 1TF (1285 aa).

The segment at 8–28 (CMCTPAARVFWNAGQVFCTRC) adopts a C4-type; atypical zinc-finger fold. In terms of domain architecture, Peptidase C31 spans 69 to 180 (ECTPSGCCWL…QPFCPFEEAH (112 aa)). Residues 69–182 (ECTPSGCCWL…FCPFEEAHSS (114 aa)) are PCP1-alpha. Catalysis depends on for Nsp1-alpha papain-like cysteine proteinase activity residues Cys-76 and His-146. Positions 269–384 (PDVFDGKCWL…IFRFGAHKWY (116 aa)) are PCP1-beta. A Peptidase C32 domain is found at 269–385 (PDVFDGKCWL…FRFGAHKWYG (117 aa)). Residues Cys-276 and His-345 each act as for Nsp1-beta papain-like cysteine proteinase activity in the active site. Disordered stretches follow at residues 752–797 (PSDP…DAGA) and 1050–1088 (KPVG…SRVS). The span at 775–790 (APASTTTLVREQTPDN) shows a compositional bias: polar residues. Helical transmembrane passes span 1136 to 1156 (LWLQ…CSVV), 1170 to 1190 (FLVL…LLLY), 1211 to 1231 (VMLS…AALW), and 1250 to 1270 (VISG…FLLF).

It is found in the host nucleus. It localises to the host cytoplasm. Its subcellular location is the host membrane. Inhibits host IFN-beta production. Plays a role in the degradation of the host transcriptional activator CREBBP protein. The degradation of host CREBBP which is a key component of the IFN enhanceosome is likely responsible for the inhibition of interferon mediated by Nsp1-alpha. Also participates in the inhibition of host NF-kappa-B activation. In terms of biological role, plays a role in the inhibition of the interferon-activated JAK/STAT signal transduction by mediating the ubiquitination and subsequent proteasomal degradation of host KPNA1. Functionally, plays a role in viral replication. The sequence is that of Replicase polyprotein 1TF from Porcine reproductive and respiratory syndrome virus (strain Lelystad) (PRRSV).